Here is a 736-residue protein sequence, read N- to C-terminus: Cytosolic neutral trehalase (736 aa).

The interval 1–47 (MSEAPQARRVGSVDDHSVYDDAKTYYTSEERHNNSRSGPRQRTYSQN) is disordered. The span at 11–33 (GSVDDHSVYDDAKTYYTSEERHN) shows a compositional bias: basic and acidic residues. Residues 35–47 (SRSGPRQRTYSQN) are compositionally biased toward polar residues. 5 residues coordinate Ca(2+): Asp-92, Asp-94, Asn-96, Gln-98, and Asp-103. Residues Arg-279, 286 to 287 (WD), Asn-323, 332 to 334 (RSQ), Glu-399, Arg-448, and Gly-451 each bind substrate. Catalysis depends on proton donor/acceptor residues Asp-453 and Glu-657.

It belongs to the glycosyl hydrolase 37 family. It depends on Ca(2+) as a cofactor.

It is found in the cytoplasm. It catalyses the reaction alpha,alpha-trehalose + H2O = alpha-D-glucose + beta-D-glucose. Its pathway is carbohydrate degradation. In terms of biological role, hydrolyzes intracellular trehalose to glucose. Plays a role in pathogenicity, specifically in proliferation of invasive hyphae in rice blast disease. This chain is Cytosolic neutral trehalase (NTH1), found in Pyricularia oryzae (strain 70-15 / ATCC MYA-4617 / FGSC 8958) (Rice blast fungus).